The chain runs to 281 residues: Spermatogenesis-associated serine-rich protein 1 (281 aa).

Basic and acidic residues predominate over residues 1–14 (MEAARDAQHSDVLE). The segment at 1–92 (MEAARDAQHS…SSSAQANRSL (92 aa)) is disordered. The segment covering 21-37 (SRTSSHQNRRASLSSDG) has biased composition (polar residues). A Phosphothreonine modification is found at Thr-53. Positions 54-65 (PSDTASGLGQKT) are enriched in polar residues. Over residues 66–85 (SSTSSSSSSSSSSSPSSSSS) the composition is skewed to low complexity. Phosphoserine is present on residues Ser-71, Ser-74, Ser-77, Ser-78, Ser-79, and Ser-91.

Detected in pachytene spermatocytes and round spermatids.

This chain is Spermatogenesis-associated serine-rich protein 1 (Spats1), found in Rattus norvegicus (Rat).